A 932-amino-acid chain; its full sequence is MGLTPMMRQYLEVKESCKDCILFFRLGDFYEMFFEDAKVASKELELVLTGRDCGLEERAPMCGIPYHAANTYIGRLVSAGYKIAICEQLEDPSASKGIVKRGIIKIITPGTYTDSSFLEENKNNYIMSFYLDDNMCSMSFADISTGEFNSTHSNFKEAVVLDEISKFAPREIVLEENIKESFIHTIKERFPNISISKIKEENFDYNIDNNLREQFNNFSENEYETIVKKSANGLLYYIFHTQKNILSNINKIDYYSIVDYLTIDVNSRRNLEITENLREKIKKGSLLWVLDKTNTAMGGRQLRRWIEQPLINKTPIENRLNAVEELLNNISLQEDLKEDLKSIYDIERIVGKVASKSVNAKELISLKCSIGKVPYIKKYLSSFKSDLFLNMEQCIDTLEDIHKLLDKALLDNPSLSVKEGNIIKEGFNEEVDSLREAKSNGKKWIASLEQKEKEETGIKSLKVSYNKVFGYFIEITKANLNLVPEGRYIRKQTLSNAERYITPELKEMEEKILGAEEKLIDIEYKLFTEIRDFIEENIDRMQKTARIISDIDCLCSLATVALENNYIKPNINAKDEILIEEGRHPVVEKVIPKGEFISNDSLIDTKENQLILITGPNMAGKSTYMRQVALITIMAQIGSFVPAKEANISICDKIFTRIGASDDLAAGKSTFMVEMWEVSNILKNATSKSLVLLDEVGRGTSTYDGLSIAWSVIEYICNNKNLRCKTLFATHYHELTKLEDNIKGVKNYSVSVSELENEIVFLRKIIRGGADQSYGIEVAKLAGLPSPVINRAKEILQHIEGDKEENSLNITPSKEYKSKDYIEVSKDTLNTKNNLESEIKHDTLSETNTATIIEDESIKEHLCSNKKQIQCKKNNEKSIKKELAVDSFQINFEHIKKDKVIEEIKNIDILNMTPMEGFNKLYDIINKTKDID.

615-622 (GPNMAGKS) serves as a coordination point for ATP.

It belongs to the DNA mismatch repair MutS family.

This protein is involved in the repair of mismatches in DNA. It is possible that it carries out the mismatch recognition step. This protein has a weak ATPase activity. This Clostridium botulinum (strain Loch Maree / Type A3) protein is DNA mismatch repair protein MutS.